Consider the following 176-residue polypeptide: NAD(P)H-quinone oxidoreductase subunit 6, chloroplastic (176 aa).

A run of 5 helical transmembrane segments spans residues 10-30, 32-52, 61-81, 92-112, and 152-172; these read ILLVFLGSGLILGGLGVVLFT, PIFSAFSLGLVLVCISLFHIL, AQLLIYVGAVNVLIIFAVMFM, LWTVGDGVTSLVCTSILFSLI, and FYLPFELISIILLVALIGAIA.

It belongs to the complex I subunit 6 family. NDH is composed of at least 16 different subunits, 5 of which are encoded in the nucleus.

Its subcellular location is the plastid. It is found in the chloroplast thylakoid membrane. The enzyme catalyses a plastoquinone + NADH + (n+1) H(+)(in) = a plastoquinol + NAD(+) + n H(+)(out). It carries out the reaction a plastoquinone + NADPH + (n+1) H(+)(in) = a plastoquinol + NADP(+) + n H(+)(out). Functionally, NDH shuttles electrons from NAD(P)H:plastoquinone, via FMN and iron-sulfur (Fe-S) centers, to quinones in the photosynthetic chain and possibly in a chloroplast respiratory chain. The immediate electron acceptor for the enzyme in this species is believed to be plastoquinone. Couples the redox reaction to proton translocation, and thus conserves the redox energy in a proton gradient. This chain is NAD(P)H-quinone oxidoreductase subunit 6, chloroplastic (ndhG), found in Drimys granadensis.